Consider the following 266-residue polypeptide: MKEELFKEKSRYITGFVLIIVADLILYADNLLLFWAVLGGIYAVGFSEALRLFQVKASFSLYLILVLSWVAAYFNGRPIECALISAMVMASVIAYQKAHHSEAILPFLYPGVGFFALFGVYKDFGAVAIIWLLVVVVASDVGAFFGGKLLGKTPFTPTSPNKTLEGALIGVVLASVLGSFVGMGKLSGGFFMALFFSFLIALVAVFGDLYESYLKRKVGIKDSGKILPGHGGVLDRLDSMLFGALGLHALLYFLEIWKETAVFLGD.

8 consecutive transmembrane segments (helical) span residues 16 to 36, 52 to 72, 78 to 98, 101 to 121, 125 to 145, 164 to 184, 186 to 206, and 237 to 257; these read FVLI…LFWA, LFQV…WVAA, PIEC…YQKA, SEAI…FGVY, GAVA…GAFF, LEGA…VGMG, LSGG…VAVF, and LDSM…LEIW.

It belongs to the CDS family.

The protein localises to the cell inner membrane. The catalysed reaction is a 1,2-diacyl-sn-glycero-3-phosphate + CTP + H(+) = a CDP-1,2-diacyl-sn-glycerol + diphosphate. It functions in the pathway phospholipid metabolism; CDP-diacylglycerol biosynthesis; CDP-diacylglycerol from sn-glycerol 3-phosphate: step 3/3. The protein is Phosphatidate cytidylyltransferase (cdsA) of Helicobacter pylori (strain ATCC 700392 / 26695) (Campylobacter pylori).